A 155-amino-acid chain; its full sequence is Small ribosomal subunit protein uS7c (155 aa).

The protein belongs to the universal ribosomal protein uS7 family. Part of the 30S ribosomal subunit.

It localises to the plastid. Its subcellular location is the chloroplast. Functionally, one of the primary rRNA binding proteins, it binds directly to 16S rRNA where it nucleates assembly of the head domain of the 30S subunit. The protein is Small ribosomal subunit protein uS7c (rps7) of Physcomitrium patens (Spreading-leaved earth moss).